A 90-amino-acid chain; its full sequence is Small ribosomal subunit protein bS20 (90 aa).

The span at 1-11 shows a compositional bias: basic and acidic residues; sequence MANIKSSEKDI. Positions 1–29 are disordered; that stretch reads MANIKSSEKDIRRTKRRNAANSQNRSRLR.

Belongs to the bacterial ribosomal protein bS20 family.

In terms of biological role, binds directly to 16S ribosomal RNA. The sequence is that of Small ribosomal subunit protein bS20 from Leptospira borgpetersenii serovar Hardjo-bovis (strain JB197).